We begin with the raw amino-acid sequence, 749 residues long: Pectate disaccharide-lyase (749 aa).

A signal peptide spans 1–26; that stretch reads MKYAASGLLSVALNSLLLLGSNQRFA. Positions 538, 562, 563, and 566 each coordinate Ca(2+). The active-site Proton acceptor is lysine 595.

Belongs to the polysaccharide lyase 9 family. Ca(2+) is required as a cofactor.

Its subcellular location is the secreted. It catalyses the reaction [(1-&gt;4)-alpha-D-galacturonosyl](n) = 4-(4-deoxy-alpha-D-galact-4-enuronosyl)-D-galacturonate + [(1-&gt;4)-alpha-D-galacturonosyl](n-2). Activity on pectate is nearly completely inhibited by ethyleneglycol-bis-(P-aminoethyl ether) N,N'-tetraacetic acid (EGTA), EDTA or nitrilotriacetic acid. Activity is specifically restored by the addition of Ca(2+). Exo-cleaving lyase that catalyzes the digestion of pectate. Contributes to pectate catabolism but not to bacterial virulence. In vitro can also use citrus pectin and highly methyl-esterified Link pectin as substrates. The polypeptide is Pectate disaccharide-lyase (Dickeya chrysanthemi (Pectobacterium chrysanthemi)).